The following is a 139-amino-acid chain: D-ribose pyranase (139 aa).

His-20 acts as the Proton donor in catalysis. Residues Asp-28, His-106, and 128–130 contribute to the substrate site; that span reads YAN.

The protein belongs to the RbsD / FucU family. RbsD subfamily. In terms of assembly, homodecamer.

Its subcellular location is the cytoplasm. It carries out the reaction beta-D-ribopyranose = beta-D-ribofuranose. Its pathway is carbohydrate metabolism; D-ribose degradation; D-ribose 5-phosphate from beta-D-ribopyranose: step 1/2. Its function is as follows. Catalyzes the interconversion of beta-pyran and beta-furan forms of D-ribose. In Haemophilus influenzae (strain 86-028NP), this protein is D-ribose pyranase.